The primary structure comprises 149 residues: Urease accessory protein UreE (149 aa).

It belongs to the UreE family.

It localises to the cytoplasm. Functionally, involved in urease metallocenter assembly. Binds nickel. Probably functions as a nickel donor during metallocenter assembly. This is Urease accessory protein UreE from Prochlorococcus marinus (strain MIT 9215).